A 351-amino-acid chain; its full sequence is Ferredoxin--NADP reductase (351 aa).

FAD is bound by residues Asp44, Gln52, Tyr57, Val97, Phe132, Asp296, and Ser337.

It belongs to the ferredoxin--NADP reductase type 2 family. Homodimer. It depends on FAD as a cofactor.

The enzyme catalyses 2 reduced [2Fe-2S]-[ferredoxin] + NADP(+) + H(+) = 2 oxidized [2Fe-2S]-[ferredoxin] + NADPH. This Paraburkholderia phymatum (strain DSM 17167 / CIP 108236 / LMG 21445 / STM815) (Burkholderia phymatum) protein is Ferredoxin--NADP reductase.